The following is a 278-amino-acid chain: Undecaprenyl-diphosphatase 1 (278 aa).

A run of 7 helical transmembrane segments spans residues V46 to F66, Y91 to A111, L119 to A139, S153 to F173, V191 to Y211, P225 to L245, and F256 to I276.

Belongs to the UppP family.

The protein resides in the cell membrane. It catalyses the reaction di-trans,octa-cis-undecaprenyl diphosphate + H2O = di-trans,octa-cis-undecaprenyl phosphate + phosphate + H(+). Functionally, catalyzes the dephosphorylation of undecaprenyl diphosphate (UPP). Confers resistance to bacitracin. The polypeptide is Undecaprenyl-diphosphatase 1 (Frankia alni (strain DSM 45986 / CECT 9034 / ACN14a)).